Here is a 430-residue protein sequence, read N- to C-terminus: MKTTIAEVNQYVGQEVTIGAWLANKRSSGKIAFLQLRDGTGFIQGVVEKANVSEEVFQRAKTLTQETSLYVTGTVRVDERSPFGYELSVTNIQVINEAVDYPITPKEHGVEFLMDHRHLWLRSRRQHAIMKIRNELIRATYEFFNERGFVKVDAPILTGSAPEGTTELFHTKYFDEDAYLSQSGQLYMEAAAMALGKVFSFGPTFRAEKSKTRRHLIEFWMIEPEMAFYEFEDNLRLQEEYVSYLVQSVLSRCQLELGRLGRDVTKLELVKPPFPRLTYDEAIKLLHDKGFTDIEWGDDFGAPHETAIAESFDKPVFITHYPTSLKPFYMQPDPNRPDVVLCADLIAPEGYGEIIGGSERIHDYELLKQRLEEHHLPLEAYEWYLDLRKYGSVPHSGFGLGLERTVAWICGVEHVRETIPFPRLLNRLYP.

Belongs to the class-II aminoacyl-tRNA synthetase family. Homodimer.

The protein localises to the cytoplasm. It catalyses the reaction tRNA(Asn) + L-asparagine + ATP = L-asparaginyl-tRNA(Asn) + AMP + diphosphate + H(+). This chain is Asparagine--tRNA ligase, found in Geobacillus thermodenitrificans (strain NG80-2).